Here is a 126-residue protein sequence, read N- to C-terminus: Aspartate 1-decarboxylase (126 aa).

The active-site Schiff-base intermediate with substrate; via pyruvic acid is S25. A Pyruvic acid (Ser) modification is found at S25. T57 lines the substrate pocket. The Proton donor role is filled by Y58. 73 to 75 (GAA) provides a ligand contact to substrate.

The protein belongs to the PanD family. In terms of assembly, heterooctamer of four alpha and four beta subunits. Pyruvate serves as cofactor. Post-translationally, is synthesized initially as an inactive proenzyme, which is activated by self-cleavage at a specific serine bond to produce a beta-subunit with a hydroxyl group at its C-terminus and an alpha-subunit with a pyruvoyl group at its N-terminus.

The protein localises to the cytoplasm. It carries out the reaction L-aspartate + H(+) = beta-alanine + CO2. It functions in the pathway cofactor biosynthesis; (R)-pantothenate biosynthesis; beta-alanine from L-aspartate: step 1/1. In terms of biological role, catalyzes the pyruvoyl-dependent decarboxylation of aspartate to produce beta-alanine. The chain is Aspartate 1-decarboxylase from Tolumonas auensis (strain DSM 9187 / NBRC 110442 / TA 4).